Consider the following 264-residue polypeptide: Undecaprenyl-diphosphatase (264 aa).

Transmembrane regions (helical) follow at residues 42 to 62, 82 to 102, 109 to 129, 146 to 166, 184 to 204, 215 to 235, and 243 to 263; these read ESLL…LVVF, TQFS…GLLF, LFGG…LLLW, AFII…RSGA, FSFL…LMSG, ILAT…TWMI, and LSWF…FAYA.

It belongs to the UppP family.

The protein resides in the cell membrane. It catalyses the reaction di-trans,octa-cis-undecaprenyl diphosphate + H2O = di-trans,octa-cis-undecaprenyl phosphate + phosphate + H(+). In terms of biological role, catalyzes the dephosphorylation of undecaprenyl diphosphate (UPP). Confers resistance to bacitracin. The sequence is that of Undecaprenyl-diphosphatase from Christiangramia forsetii (strain DSM 17595 / CGMCC 1.15422 / KT0803) (Gramella forsetii).